The chain runs to 825 residues: MSGWRKIYYKLLNLPLKLLVKSKVIPADPVVELGLDPSRPILYVLPYNSQADLLTLRAKCLALGLPDPSQSFEFNGVELPSHVFINDGPRVFRYYVPKQKSVKLFHDYLDLHRANPDLDVQMVPVSVMFGRSPGREGHTQAAPHLRLLNGIEKFFAVLWLGRDSFVRFSSPVSLRYMATEHGTDKTIAHKLARVARMHFSRQRLAAVGPRLPVRQELFNKLLDSKAIKKAVDDEARSKKISHEKAQQNAIALMEEIAADFSYEAVRLSDRVLSWTWNRLYQGINVHNAERVRQLAQDGHGIVYVPCHRSHMDYLLLSYVLYHQGLVPPHIAAGINLNFWPAGPIFRRLGAFFIRRTFKGNKLYSTIFREYLGELFARGYSVEYFMEGGRSRTGRLLDPKTGTLAMTIQAMLRGGTRPITLVPIYVGYEHVMEVGTYAKELRGAVKEKEGFMQMVRGLRKLRNLGQGYVNFGEPLPLTTYLNQHVPQWRDAIDPIEAQRPSWLTPTVQDISMDIMVRINNSAAANAMNLCSTALLASRQRSLTREQMHEQLDCYLQLLRQVPYHKDITAPKKTADELLEHALGMNKFEVEKDSIGDIIILPREQAVLMTYYRNNIQHLLILPSLIASIVIHHRRITLAEVVRQITLIYPLLQAELFLHYSNEQLPRVLETLANELTRQELLCSRDGQLAINPPRIRTLQLLSAGVRETLQRYAITLSLLCANPEINRGTLEKESRNMAQRLSVLHGINAPEFFDKAVFSTLVATLRTEGYITDSAEAAQGDIVTIYNILGDLITPEVRLTIESASSSTEMEASTSSSQTAEETTQG.

The HXXXXD motif motif lies at 306 to 311 (CHRSHM). Positions 802-825 (SASSSTEMEASTSSSQTAEETTQG) are disordered.

Belongs to the GPAT/DAPAT family.

It is found in the cell inner membrane. The catalysed reaction is sn-glycerol 3-phosphate + an acyl-CoA = a 1-acyl-sn-glycero-3-phosphate + CoA. The protein operates within phospholipid metabolism; CDP-diacylglycerol biosynthesis; CDP-diacylglycerol from sn-glycerol 3-phosphate: step 1/3. The sequence is that of Glycerol-3-phosphate acyltransferase from Pectobacterium atrosepticum (strain SCRI 1043 / ATCC BAA-672) (Erwinia carotovora subsp. atroseptica).